The following is a 645-amino-acid chain: UvrABC system protein C (645 aa).

Positions 12-91 (TGPGVYLYKN…IKQRKPRFNV (80 aa)) constitute a GIY-YIG domain. The UVR domain occupies 202-237 (ADLERSLEVRMQEAAAAEQFELAAKYRDLLVTLHQL).

It belongs to the UvrC family. Interacts with UvrB in an incision complex.

It is found in the cytoplasm. In terms of biological role, the UvrABC repair system catalyzes the recognition and processing of DNA lesions. UvrC both incises the 5' and 3' sides of the lesion. The N-terminal half is responsible for the 3' incision and the C-terminal half is responsible for the 5' incision. The chain is UvrABC system protein C from Acidobacterium capsulatum (strain ATCC 51196 / DSM 11244 / BCRC 80197 / JCM 7670 / NBRC 15755 / NCIMB 13165 / 161).